A 24-amino-acid chain; its full sequence is Pandinin-2 (24 aa).

In terms of assembly, homooligomer. As to expression, expressed by the venom gland.

It is found in the secreted. The protein resides in the target cell membrane. Its function is as follows. Disrupts cell membranes through formation of pores. Has strong antimicrobial activity against Gram-positive bacteria B.subtilis, S.epidermidis, E.faecalis and S.aureus. Is less active against Gram-negative bacteria P.aeruginosa and E.coli. Also increases efficacy of antibiotics (ampicillin, chloramphenicol, streptomycin, kanamycin, novobiocin) when tested against E.coli, probably by facilitating their incorporation into the bacteria. Possesses antifungal activity against C.albicans and hemolytic activity against human, sheep and pig erythrocytes. This is Pandinin-2 from Pandinus imperator (Emperor scorpion).